A 185-amino-acid chain; its full sequence is Ribosome-recycling factor (185 aa).

It belongs to the RRF family.

Its subcellular location is the cytoplasm. In terms of biological role, responsible for the release of ribosomes from messenger RNA at the termination of protein biosynthesis. May increase the efficiency of translation by recycling ribosomes from one round of translation to another. The polypeptide is Ribosome-recycling factor (Wolbachia pipientis wMel).